The following is a 222-amino-acid chain: Interleukin-12 subunit alpha (222 aa).

Positions 1–25 are cleaved as a signal peptide; sequence MCPPRGLLLVTILVLLNHLDHLSLA. 3 cysteine pairs are disulfide-bonded: Cys40-Cys113, Cys67-Cys199, and Cys88-Cys126. N-linked (GlcNAc...) asparagine glycosylation is found at Asn42, Asn96, Asn110, and Asn183.

It belongs to the IL-6 superfamily. Heterodimer with IL12B; disulfide-linked. This heterodimer is known as interleukin IL-12. Heterodimer with EBI3/IL27B; not disulfide-linked. This heterodimer is known as interleukin IL-35. Interacts with NBR1; this interaction promotes IL-12 secretion.

It localises to the secreted. In terms of biological role, heterodimerizes with IL12B to form the IL-12 cytokine or with EBI3/IL27B to form the IL-35 cytokine. IL-12 is primarily produced by professional antigen-presenting cells (APCs) such as B-cells and dendritic cells (DCs) as well as macrophages and granulocytes and regulates T-cell and natural killer-cell responses, induces the production of interferon-gamma (IFN-gamma), favors the differentiation of T-helper 1 (Th1) cells and is an important link between innate resistance and adaptive immunity. Mechanistically, exerts its biological effects through a receptor composed of IL12R1 and IL12R2 subunits. Binding to the receptor results in the rapid tyrosine phosphorylation of a number of cellular substrates including the JAK family kinases TYK2 and JAK2. In turn, recruited STAT4 gets phosphorylated and translocates to the nucleus where it regulates cytokine/growth factor responsive genes. As part of IL-35, plays essential roles in maintaining the immune homeostasis of the liver microenvironment and also functions as an immune-suppressive cytokine. Mediates biological events through unconventional receptors composed of IL12RB2 and gp130/IL6ST heterodimers or homodimers. Signaling requires the transcription factors STAT1 and STAT4, which form a unique heterodimer that binds to distinct DNA sites. This chain is Interleukin-12 subunit alpha (IL12A), found in Felis catus (Cat).